We begin with the raw amino-acid sequence, 435 residues long: Methylenetetrahydrofolate--tRNA-(uracil-5-)-methyltransferase TrmFO (435 aa).

7-12 (GAGLAG) provides a ligand contact to FAD.

The protein belongs to the MnmG family. TrmFO subfamily. FAD is required as a cofactor.

It localises to the cytoplasm. It carries out the reaction uridine(54) in tRNA + (6R)-5,10-methylene-5,6,7,8-tetrahydrofolate + NADH + H(+) = 5-methyluridine(54) in tRNA + (6S)-5,6,7,8-tetrahydrofolate + NAD(+). It catalyses the reaction uridine(54) in tRNA + (6R)-5,10-methylene-5,6,7,8-tetrahydrofolate + NADPH + H(+) = 5-methyluridine(54) in tRNA + (6S)-5,6,7,8-tetrahydrofolate + NADP(+). In terms of biological role, catalyzes the folate-dependent formation of 5-methyl-uridine at position 54 (M-5-U54) in all tRNAs. The chain is Methylenetetrahydrofolate--tRNA-(uracil-5-)-methyltransferase TrmFO from Thermotoga neapolitana (strain ATCC 49049 / DSM 4359 / NBRC 107923 / NS-E).